The sequence spans 349 residues: DNA polymerase IV (349 aa).

In terms of domain architecture, UmuC spans 3–187 (VLFVDFDYFF…LDISKVPGVG (185 aa)). Positions 7 and 105 each coordinate Mg(2+). Residue E106 is part of the active site.

It belongs to the DNA polymerase type-Y family. In terms of assembly, monomer. Requires Mg(2+) as cofactor.

Its subcellular location is the cytoplasm. It carries out the reaction DNA(n) + a 2'-deoxyribonucleoside 5'-triphosphate = DNA(n+1) + diphosphate. Poorly processive, error-prone DNA polymerase involved in untargeted mutagenesis. Copies undamaged DNA at stalled replication forks, which arise in vivo from mismatched or misaligned primer ends. These misaligned primers can be extended by PolIV. Exhibits no 3'-5' exonuclease (proofreading) activity. May be involved in translesional synthesis. In Metallosphaera sedula (strain ATCC 51363 / DSM 5348 / JCM 9185 / NBRC 15509 / TH2), this protein is DNA polymerase IV.